The following is a 448-amino-acid chain: Glutamyl-tRNA(Gln) amidotransferase subunit D (448 aa).

The Asparaginase/glutaminase domain maps to 92–423 (SEVKIISTGG…DKIRSLMLTN (332 aa)). Residues Thr-102, Thr-178, Asp-179, and Lys-257 contribute to the active site.

This sequence belongs to the asparaginase 1 family. GatD subfamily. In terms of assembly, heterodimer of GatD and GatE.

It carries out the reaction L-glutamyl-tRNA(Gln) + L-glutamine + ATP + H2O = L-glutaminyl-tRNA(Gln) + L-glutamate + ADP + phosphate + H(+). Functionally, allows the formation of correctly charged Gln-tRNA(Gln) through the transamidation of misacylated Glu-tRNA(Gln) in organisms which lack glutaminyl-tRNA synthetase. The reaction takes place in the presence of glutamine and ATP through an activated gamma-phospho-Glu-tRNA(Gln). The GatDE system is specific for glutamate and does not act on aspartate. This Sulfurisphaera tokodaii (strain DSM 16993 / JCM 10545 / NBRC 100140 / 7) (Sulfolobus tokodaii) protein is Glutamyl-tRNA(Gln) amidotransferase subunit D.